A 60-amino-acid chain; its full sequence is Probable tautomerase SP_1017 (60 aa).

Residue Pro-2 is the Proton acceptor; via imino nitrogen of the active site.

Belongs to the 4-oxalocrotonate tautomerase family.

This Streptococcus pneumoniae serotype 4 (strain ATCC BAA-334 / TIGR4) protein is Probable tautomerase SP_1017.